Consider the following 319-residue polypeptide: MQVTFLGTSSGVPTRARNVSAVALRLPQRSEMWLFDCGEGTQHQFLRSDLRLSQLRRVFVTHMHGDHVFGLPGLLASLGLSGSCQDGVDLYGPDPLESFLKGALNTSSTRIGYPLQVHRSRPAAEQGTLLFEDDELTVRCTPLTHRVPAYAYRVDQKPLAGRFDIDKARSLGIPPGPVYAQLKRGESVTLEDGRVIDGTTLCGPERPGVSVMICTDTVFCDAAVELARGVDLLIHESTFAHAEAEMAFQKQHSTSTMAAQTAAEAGVGQLAITHLSPRYVPGNPVSPDDLLKEAQAIFPNTVLAKDFLSLDVKPCCNSS.

The Zn(2+) site is built by H62, H64, D66, H67, H145, D216, and H274. The active-site Proton acceptor is the D66.

This sequence belongs to the RNase Z family. As to quaternary structure, homodimer. Requires Zn(2+) as cofactor.

The enzyme catalyses Endonucleolytic cleavage of RNA, removing extra 3' nucleotides from tRNA precursor, generating 3' termini of tRNAs. A 3'-hydroxy group is left at the tRNA terminus and a 5'-phosphoryl group is left at the trailer molecule.. Zinc phosphodiesterase, which displays some tRNA 3'-processing endonuclease activity. Probably involved in tRNA maturation, by removing a 3'-trailer from precursor tRNA. In Parasynechococcus marenigrum (strain WH8102), this protein is Ribonuclease Z.